The chain runs to 229 residues: Cytochrome c oxidase subunit 2 (229 aa).

At 1–26 the chain is on the mitochondrial intermembrane side; it reads MANWTQLGLQDASSPLMEELIYFHDY. Residues 27 to 48 form a helical membrane-spanning segment; it reads TLIILTLITILVFYGLASLLFS. The Mitochondrial matrix portion of the chain corresponds to 49–62; that stretch reads SNTNRFFLEGQGLE. Residues 63–82 traverse the membrane as a helical segment; that stretch reads TVWTIIPAVILIFIALPSLQ. At 83–229 the chain is on the mitochondrial intermembrane side; that stretch reads LLYLMDEVNN…ETWVSNFITE (147 aa). 6 residues coordinate Cu cation: histidine 161, cysteine 196, glutamate 198, cysteine 200, histidine 204, and methionine 207. Residue glutamate 198 coordinates Mg(2+).

It belongs to the cytochrome c oxidase subunit 2 family. Component of the cytochrome c oxidase (complex IV, CIV), a multisubunit enzyme composed of a catalytic core of 3 subunits and several supernumerary subunits. The complex exists as a monomer or a dimer and forms supercomplexes (SCs) in the inner mitochondrial membrane with ubiquinol-cytochrome c oxidoreductase (cytochrome b-c1 complex, complex III, CIII). Cu cation serves as cofactor.

The protein localises to the mitochondrion inner membrane. The catalysed reaction is 4 Fe(II)-[cytochrome c] + O2 + 8 H(+)(in) = 4 Fe(III)-[cytochrome c] + 2 H2O + 4 H(+)(out). In terms of biological role, component of the cytochrome c oxidase, the last enzyme in the mitochondrial electron transport chain which drives oxidative phosphorylation. The respiratory chain contains 3 multisubunit complexes succinate dehydrogenase (complex II, CII), ubiquinol-cytochrome c oxidoreductase (cytochrome b-c1 complex, complex III, CIII) and cytochrome c oxidase (complex IV, CIV), that cooperate to transfer electrons derived from NADH and succinate to molecular oxygen, creating an electrochemical gradient over the inner membrane that drives transmembrane transport and the ATP synthase. Cytochrome c oxidase is the component of the respiratory chain that catalyzes the reduction of oxygen to water. Electrons originating from reduced cytochrome c in the intermembrane space (IMS) are transferred via the dinuclear copper A center (CU(A)) of subunit 2 and heme A of subunit 1 to the active site in subunit 1, a binuclear center (BNC) formed by heme A3 and copper B (CU(B)). The BNC reduces molecular oxygen to 2 water molecules using 4 electrons from cytochrome c in the IMS and 4 protons from the mitochondrial matrix. This Patiria pectinifera (Starfish) protein is Cytochrome c oxidase subunit 2 (COII).